Reading from the N-terminus, the 534-residue chain is tRNA uridine(34) acetyltransferase (534 aa).

Residues Lys70–Glu330 are radical S-adenosyl-L-methionine (rSAM). Residues Arg73–Lys344 enclose the Radical SAM core domain. Residues Cys90, Cys95, and Cys98 each coordinate [4Fe-4S] cluster. An acetyl-CoA-binding site is contributed by Lys150. A disulfide bridge connects residues Cys384 and Cys389. An N-acetyltransferase domain is found at Ile387 to Leu534. Acetyl-CoA is bound by residues Gln461–Val464, Tyr485–Arg487, and Tyr518.

Belongs to the ELP3 family. It depends on [4Fe-4S] cluster as a cofactor.

It catalyses the reaction uridine(34) in tRNA + acetyl-CoA + S-adenosyl-L-methionine + H2O = 5-(carboxymethyl)uridine(34) in tRNA + 5'-deoxyadenosine + L-methionine + CoA + 2 H(+). It functions in the pathway tRNA modification. Its function is as follows. tRNA uridine(34) acetyltransferase, which mediates formation of carboxymethyluridine in the wobble base at position 34 in tRNAs. The proposed mechanism is the following: (i) recruits S-adenosyl-L-methionine and cleaves it to generate a 5'-deoxyadenosine radical (5'-dA) in the radical S-adenosyl-L-methionine (rSAM) region, (ii) hydrolyzes acetyl-CoA in the N-acetyltransferase domain and (iii) an acetyl radical is formed by the products of the two domains and (iv) is transferred onto the C5 position of uridine(34) in the bound tRNA molecule. Does not show protein lysine acetyltransferase activity. This is tRNA uridine(34) acetyltransferase from Methanocaldococcus infernus (strain DSM 11812 / JCM 15783 / ME).